The following is a 46-amino-acid chain: Pape peptide (46 aa).

The segment covering 1-10 (KQLLKEALAP) has biased composition (low complexity). The segment at 1-46 (KQLLKEALAPEPAPKPAPEPAPEPAPEPAPEAAPEPAAAAPEAAPE) is disordered. A compositionally biased stretch (pro residues) spans 11-33 (EPAPKPAPEPAPEPAPEPAPEAA). PAPE repeat units lie at residues 16-19 (PAPE), 20-23 (PAPE), 24-27 (PAPE), and 28-31 (PAPE). Residues 34–46 (PEPAAAAPEAAPE) are compositionally biased toward low complexity.

Expressed by the venom gland.

Its subcellular location is the secreted. This is Pape peptide from Tityus stigmurus (Brazilian scorpion).